We begin with the raw amino-acid sequence, 126 residues long: Small ribosomal subunit protein uS13 (126 aa).

A disordered region spans residues 95-126 (NLPVHGQRTHTNARTRKGPRRAIAGKKKAGKK).

The protein belongs to the universal ribosomal protein uS13 family. Part of the 30S ribosomal subunit. Forms a loose heterodimer with protein S19. Forms two bridges to the 50S subunit in the 70S ribosome.

Functionally, located at the top of the head of the 30S subunit, it contacts several helices of the 16S rRNA. In the 70S ribosome it contacts the 23S rRNA (bridge B1a) and protein L5 of the 50S subunit (bridge B1b), connecting the 2 subunits; these bridges are implicated in subunit movement. Contacts the tRNAs in the A and P-sites. The protein is Small ribosomal subunit protein uS13 of Frankia casuarinae (strain DSM 45818 / CECT 9043 / HFP020203 / CcI3).